A 134-amino-acid chain; its full sequence is Putative esterase PA0474 (134 aa).

Belongs to the thioesterase PaaI family.

The polypeptide is Putative esterase PA0474 (Pseudomonas aeruginosa (strain ATCC 15692 / DSM 22644 / CIP 104116 / JCM 14847 / LMG 12228 / 1C / PRS 101 / PAO1)).